Here is a 147-residue protein sequence, read N- to C-terminus: 3-dehydroquinate dehydratase (147 aa).

Tyrosine 23 acts as the Proton acceptor in catalysis. Substrate is bound by residues asparagine 74, histidine 80, and aspartate 87. Catalysis depends on histidine 100, which acts as the Proton donor. Substrate is bound by residues 101–102 and arginine 111; that span reads LS.

The protein belongs to the type-II 3-dehydroquinase family. As to quaternary structure, homododecamer.

The enzyme catalyses 3-dehydroquinate = 3-dehydroshikimate + H2O. The protein operates within metabolic intermediate biosynthesis; chorismate biosynthesis; chorismate from D-erythrose 4-phosphate and phosphoenolpyruvate: step 3/7. Catalyzes a trans-dehydration via an enolate intermediate. The sequence is that of 3-dehydroquinate dehydratase from Clostridium botulinum (strain Kyoto / Type A2).